Here is a 171-residue protein sequence, read N- to C-terminus: UPF0312 protein MW2606 (171 aa).

This sequence belongs to the UPF0312 family.

The chain is UPF0312 protein MW2606 from Staphylococcus aureus (strain MW2).